Reading from the N-terminus, the 917-residue chain is Protein translocase subunit SecA (917 aa).

ATP-binding positions include Gln87, 105–109 (GEGKT), and Asp501. The Zn(2+) site is built by Cys901, Cys903, Cys912, and His913.

The protein belongs to the SecA family. In terms of assembly, monomer and homodimer. Part of the essential Sec protein translocation apparatus which comprises SecA, SecYEG and auxiliary proteins SecDF-YajC and YidC. Zn(2+) is required as a cofactor.

Its subcellular location is the cell inner membrane. It localises to the cytoplasm. It carries out the reaction ATP + H2O + cellular proteinSide 1 = ADP + phosphate + cellular proteinSide 2.. Part of the Sec protein translocase complex. Interacts with the SecYEG preprotein conducting channel. Has a central role in coupling the hydrolysis of ATP to the transfer of proteins into and across the cell membrane, serving both as a receptor for the preprotein-SecB complex and as an ATP-driven molecular motor driving the stepwise translocation of polypeptide chains across the membrane. The sequence is that of Protein translocase subunit SecA from Granulibacter bethesdensis (strain ATCC BAA-1260 / CGDNIH1).